The sequence spans 210 residues: Na(+)-translocating NADH-quinone reductase subunit D (210 aa).

The next 5 membrane-spanning stretches (helical) occupy residues 42-62 (FVMT…VSLI), 72-92 (IIVQ…VLKA), 103-123 (VFVS…AFAM), 131-151 (FIDG…VAFF), and 178-198 (NGLM…IWAI).

It belongs to the NqrDE/RnfAE family. Composed of six subunits; NqrA, NqrB, NqrC, NqrD, NqrE and NqrF.

The protein localises to the cell inner membrane. It catalyses the reaction a ubiquinone + n Na(+)(in) + NADH + H(+) = a ubiquinol + n Na(+)(out) + NAD(+). In terms of biological role, NQR complex catalyzes the reduction of ubiquinone-1 to ubiquinol by two successive reactions, coupled with the transport of Na(+) ions from the cytoplasm to the periplasm. NqrA to NqrE are probably involved in the second step, the conversion of ubisemiquinone to ubiquinol. The polypeptide is Na(+)-translocating NADH-quinone reductase subunit D (Aliivibrio fischeri (strain ATCC 700601 / ES114) (Vibrio fischeri)).